Reading from the N-terminus, the 164-residue chain is General odorant-binding protein 1 (164 aa).

Residues 1-19 form the signal peptide; the sequence is MPGVLRALLLLAAAAPLLA. Cystine bridges form between Cys-38–Cys-73, Cys-69–Cys-127, and Cys-116–Cys-136.

The protein belongs to the PBP/GOBP family. As to expression, antenna.

Present in the aqueous fluid surrounding olfactory sensory dendrites and are thought to aid in the capture and transport of hydrophobic odorants into and through this fluid. The sequence is that of General odorant-binding protein 1 from Heliothis virescens (Tobacco budworm moth).